Reading from the N-terminus, the 304-residue chain is Ribonuclease HII (304 aa).

The disordered stretch occupies residues 1 to 53 (MIRDTKQPIKVPAKPASRSGGKAKTVKPKTVKPKAVKAADGKAASAKASTSKA). Over residues 24–35 (KTVKPKTVKPKA) the composition is skewed to basic residues. Residues 36–53 (VKAADGKAASAKASTSKA) show a composition bias toward low complexity. An RNase H type-2 domain is found at 96–284 (WPIAGCDEAG…VAAAWQKIEG (189 aa)). Residues Asp-102, Glu-103, and Asp-193 each contribute to the a divalent metal cation site.

Belongs to the RNase HII family. Requires Mn(2+) as cofactor. It depends on Mg(2+) as a cofactor.

It localises to the cytoplasm. It catalyses the reaction Endonucleolytic cleavage to 5'-phosphomonoester.. Endonuclease that specifically degrades the RNA of RNA-DNA hybrids. The sequence is that of Ribonuclease HII from Rhodopseudomonas palustris (strain ATCC BAA-98 / CGA009).